Consider the following 249-residue polypeptide: uncharacterized protein (249 aa).

A divalent metal cation contacts are provided by H10, H12, E95, H129, H150, and D198.

The protein belongs to the metallo-dependent hydrolases superfamily. TatD-type hydrolase family. A divalent metal cation serves as cofactor.

This is an uncharacterized protein from Methanocaldococcus jannaschii (strain ATCC 43067 / DSM 2661 / JAL-1 / JCM 10045 / NBRC 100440) (Methanococcus jannaschii).